A 262-amino-acid polypeptide reads, in one-letter code: Spindlin-1 (262 aa).

Residues M1 to R51 are disordered. Residues K7 and K28 each participate in a glycyl lysine isopeptide (Lys-Gly) (interchain with G-Cter in SUMO2) cross-link. A compositionally biased stretch (basic residues) spans M27–S38. K44 carries the post-translational modification N6-acetyllysine; alternate. K44 participates in a covalent cross-link: Glycyl lysine isopeptide (Lys-Gly) (interchain with G-Cter in SUMO2); alternate. Residues I53 to D116 are tudor-like domain 1. Residues G93–Y98 are histone H3K4me3 and H3R8me2a binding. 2 positions are modified to phosphoserine; by AURKA: S109 and S124. Positions M132 to M193 are tudor-like domain 2. Residue E142 is a region of interest, histone H3K4me3 and H3R8me2a binding. Residue S199 is modified to Phosphoserine. The segment at L213–S262 is tudor-like domain 3. Residues D250 to H252 are histone H3K4me3 and H3R8me2a binding.

It belongs to the SPIN/STSY family. In terms of assembly, homodimer; may form higher-order oligomers. Interacts with TCF7L2/TCF4; the interaction is direct. Interacts with HABP4 and SERBP1. Interacts with SPINDOC; SPINDOC stabilizes SPIN1 and enhances its association with bivalent H3K4me3K9me3 mark. Interacts with SPOCD1; promoting recruitment of PIWIL4 and SPOCD1 to transposons. In terms of processing, phosphorylated during oocyte meiotic maturation. In terms of tissue distribution, highly expressed in ovarian cancer tissues.

Its subcellular location is the nucleus. It is found in the nucleolus. Functionally, chromatin reader that specifically recognizes and binds histone H3 both trimethylated at 'Lys-4' and 'Lys-9' (H3K4me3K9me3) and is involved in piRNA-mediated retrotransposon silencing during spermatogenesis. Plays a key role in the initiation of the PIWIL4-piRNA pathway, a pathway that directs transposon DNA methylation and silencing in the male embryonic germ cells, by promoting recruitment of DNA methylation machinery to transposons: binds young, but not old, LINE1 transposons, which are specifically marked with H3K4me3K9me3, and promotes the recruitment of PIWIL4 and SPOCD1 to transposons, leading to piRNA-directed DNA methylation. Also recognizes and binds histone H3 both trimethylated at 'Lys-4' and asymmetrically dimethylated at 'Arg-8' (H3K4me3 and H3R8me2a) and acts as an activator of Wnt signaling pathway downstream of PRMT2. In case of cancer, promotes cell cancer proliferation via activation of the Wnt signaling pathway. Overexpression induces metaphase arrest and chromosomal instability. Localizes to active rDNA loci and promotes the expression of rRNA genes. May play a role in cell-cycle regulation during the transition from gamete to embryo. Involved in oocyte meiotic resumption, a process that takes place before ovulation to resume meiosis of oocytes blocked in prophase I: may act by regulating maternal transcripts to control meiotic resumption. This Homo sapiens (Human) protein is Spindlin-1.